Reading from the N-terminus, the 476-residue chain is Sulfate adenylyltransferase subunit 1 (476 aa).

Residues 24–239 (KSMLRFLTCG…VLENVDIDQK (216 aa)) form the tr-type G domain. The interval 33–40 (GSVDDGKS) is G1. 33–40 (GSVDDGKS) serves as a coordination point for GTP. The tract at residues 91–95 (GITID) is G2. Positions 112-115 (DTPG) are G3. GTP contacts are provided by residues 112 to 116 (DTPGH) and 167 to 170 (NKMD). Residues 167–170 (NKMD) are G4. Residues 205 to 207 (SAL) are G5.

This sequence belongs to the TRAFAC class translation factor GTPase superfamily. Classic translation factor GTPase family. CysN/NodQ subfamily. As to quaternary structure, heterodimer composed of CysD, the smaller subunit, and CysN.

The catalysed reaction is sulfate + ATP + H(+) = adenosine 5'-phosphosulfate + diphosphate. It participates in sulfur metabolism; hydrogen sulfide biosynthesis; sulfite from sulfate: step 1/3. In terms of biological role, with CysD forms the ATP sulfurylase (ATPS) that catalyzes the adenylation of sulfate producing adenosine 5'-phosphosulfate (APS) and diphosphate, the first enzymatic step in sulfur assimilation pathway. APS synthesis involves the formation of a high-energy phosphoric-sulfuric acid anhydride bond driven by GTP hydrolysis by CysN coupled to ATP hydrolysis by CysD. In Vibrio atlanticus (strain LGP32) (Vibrio splendidus (strain Mel32)), this protein is Sulfate adenylyltransferase subunit 1.